A 623-amino-acid polypeptide reads, in one-letter code: MCVSSSIQTAILDWQCVDGIDIPVSRQFGDVYFSKDNGLLETRHVFLNGNNLTERLADLKPYQYFCVGETGFGTGLNILAVWQLWQQVRPDNHSHLHVISVEKFPLSKSDLERALRAWPELIILAEQLIEQYPFPIAGCHRLNFPDERFSLDLWLGDAHDVFPSIVKTHSVDAWFLDGFAPSCNPELWETQVLNQIVRLSDYGTTFASFSVAGILKRGLKAHGIHISRPRGFGHKREMLKAIWPFPDHESTTTVKGNQPSTQQHFAVIGAGIAGLHCAWSLAQRGHRVTLVDQSQPLSGASGNPLALLNPKLCPITQCHDHLMVLCWQYARRFYQNFEAFRLIQVNQLALKASDSLLNLAEQYPKDVLDAHSAQQSPLETQYDYLTLHYAGVISPQLFCNQVLQHPLIEFKQFKINQIIEIDGTVQLLSSEQAILESNAAIVCCARESGKLFEQYPTLKPIRGQVSWFEQHTFPFAPDQAFSYGGYCMQLHPQQLILGASFHPQRDDDEVLLEDHVHNFNLIHSVFPAYAQTLPPVEEWHGRASVRAQSPDYFPLVGQLQDHSKLFTLAGLGSKGYLFAPLNSEILVAHILGEACPVSANLLQKLNPQRFLKKVKIKKPYYSS.

The tRNA (mnm(5)s(2)U34)-methyltransferase stretch occupies residues 1–244; sequence MCVSSSIQTA…KREMLKAIWP (244 aa). The FAD-dependent cmnm(5)s(2)U34 oxidoreductase stretch occupies residues 268 to 623; that stretch reads IGAGIAGLHC…VKIKKPYYSS (356 aa).

This sequence in the N-terminal section; belongs to the methyltransferase superfamily. tRNA (mnm(5)s(2)U34)-methyltransferase family. In the C-terminal section; belongs to the DAO family. The cofactor is FAD.

Its subcellular location is the cytoplasm. It catalyses the reaction 5-aminomethyl-2-thiouridine(34) in tRNA + S-adenosyl-L-methionine = 5-methylaminomethyl-2-thiouridine(34) in tRNA + S-adenosyl-L-homocysteine + H(+). Its function is as follows. Catalyzes the last two steps in the biosynthesis of 5-methylaminomethyl-2-thiouridine (mnm(5)s(2)U) at the wobble position (U34) in tRNA. Catalyzes the FAD-dependent demodification of cmnm(5)s(2)U34 to nm(5)s(2)U34, followed by the transfer of a methyl group from S-adenosyl-L-methionine to nm(5)s(2)U34, to form mnm(5)s(2)U34. This chain is tRNA 5-methylaminomethyl-2-thiouridine biosynthesis bifunctional protein MnmC, found in Acinetobacter baylyi (strain ATCC 33305 / BD413 / ADP1).